The sequence spans 159 residues: Dihydrofolate reductase (159 aa).

Residues 1–158 enclose the DHFR domain; that stretch reads MISLIAALAV…HSYCFEILER (158 aa). Substrate is bound at residue I5. Residues A7 and 13–19 contribute to the NADP(+) site; that span reads VIGMENA. D27 contributes to the substrate binding site. 45–46 serves as a coordination point for NADP(+); it reads HT. Substrate contacts are provided by R52 and R57. Residues 63 to 64, K76, and 95 to 102 each bind NADP(+); these read SS and GGGRVYEQ. T113 is a binding site for substrate.

It belongs to the dihydrofolate reductase family.

The enzyme catalyses (6S)-5,6,7,8-tetrahydrofolate + NADP(+) = 7,8-dihydrofolate + NADPH + H(+). It functions in the pathway cofactor biosynthesis; tetrahydrofolate biosynthesis; 5,6,7,8-tetrahydrofolate from 7,8-dihydrofolate: step 1/1. Key enzyme in folate metabolism. Catalyzes an essential reaction for de novo glycine and purine synthesis, and for DNA precursor synthesis. The polypeptide is Dihydrofolate reductase (folA) (Escherichia coli O6:H1 (strain CFT073 / ATCC 700928 / UPEC)).